The following is a 1406-amino-acid chain: DNA-directed RNA polymerase subunit beta' (1406 aa).

The Zn(2+) site is built by Cys70, Cys72, Cys85, and Cys88. Residues Asp460, Asp462, and Asp464 each coordinate Mg(2+). Zn(2+) contacts are provided by Cys814, Cys888, Cys895, and Cys898.

Belongs to the RNA polymerase beta' chain family. As to quaternary structure, the RNAP catalytic core consists of 2 alpha, 1 beta, 1 beta' and 1 omega subunit. When a sigma factor is associated with the core the holoenzyme is formed, which can initiate transcription. The cofactor is Mg(2+). Zn(2+) serves as cofactor.

The catalysed reaction is RNA(n) + a ribonucleoside 5'-triphosphate = RNA(n+1) + diphosphate. Functionally, DNA-dependent RNA polymerase catalyzes the transcription of DNA into RNA using the four ribonucleoside triphosphates as substrates. The chain is DNA-directed RNA polymerase subunit beta' from Yersinia enterocolitica serotype O:8 / biotype 1B (strain NCTC 13174 / 8081).